The primary structure comprises 151 residues: FUN14 domain-containing protein 1 (151 aa).

A YXXL motif is present at residues 14-17 (YEVL). Transmembrane regions (helical) follow at residues 44-64 (YSVA…GFLF), 71-91 (AATA…GGYI), and 130-150 (FIKK…LGLA).

This sequence belongs to the FUN14 family.

Its subcellular location is the mitochondrion outer membrane. Acts as an activator of hypoxia-induced mitophagy, an important mechanism for mitochondrial quality control. The polypeptide is FUN14 domain-containing protein 1 (fundc1) (Xenopus tropicalis (Western clawed frog)).